A 177-amino-acid polypeptide reads, in one-letter code: Olfactory protein (177 aa).

Positions 1–17 are cleaved as a signal peptide; that stretch reads MIRIIAIVVLFFLQCQA. Cysteine 81 and cysteine 174 form a disulfide bridge.

Belongs to the calycin superfamily. Lipocalin family. In terms of tissue distribution, synthesized in Bowman glands, which secrete the mucus that bathes the cilia of the olfactory neuroepithelium.

The protein localises to the secreted. The chain is Olfactory protein from Lithobates pipiens (Northern leopard frog).